The chain runs to 519 residues: ATP synthase subunit beta, mitochondrial (519 aa).

ATP is bound at residue 195–202 (GGAGVGKT).

The protein belongs to the ATPase alpha/beta chains family. In terms of assembly, F-type ATPases have 2 components, CF(1) - the catalytic core - and CF(0) - the membrane proton channel. CF(1) has five subunits: alpha(3), beta(3), gamma(1), delta(1), epsilon(1). CF(0) has three main subunits: a, b and c.

The protein resides in the mitochondrion. It is found in the mitochondrion inner membrane. It carries out the reaction ATP + H2O + 4 H(+)(in) = ADP + phosphate + 5 H(+)(out). Its function is as follows. Mitochondrial membrane ATP synthase (F(1)F(0) ATP synthase or Complex V) produces ATP from ADP in the presence of a proton gradient across the membrane which is generated by electron transport complexes of the respiratory chain. F-type ATPases consist of two structural domains, F(1) - containing the extramembraneous catalytic core, and F(0) - containing the membrane proton channel, linked together by a central stalk and a peripheral stalk. During catalysis, ATP synthesis in the catalytic domain of F(1) is coupled via a rotary mechanism of the central stalk subunits to proton translocation. Subunits alpha and beta form the catalytic core in F(1). Rotation of the central stalk against the surrounding alpha(3)beta(3) subunits leads to hydrolysis of ATP in three separate catalytic sites on the beta subunits. The chain is ATP synthase subunit beta, mitochondrial (atp-2) from Neurospora crassa (strain ATCC 24698 / 74-OR23-1A / CBS 708.71 / DSM 1257 / FGSC 987).